The primary structure comprises 118 residues: Lutropin subunit beta (118 aa).

Cystine bridges form between C9-C57, C23-C72, C26-C110, C34-C88, C38-C90, and C93-C100. N13 carries N-linked (GlcNAc...) asparagine glycosylation.

The protein belongs to the glycoprotein hormones subunit beta family. As to quaternary structure, heterodimer of a common alpha chain and a unique beta chain which confers biological specificity to thyrotropin, lutropin, follitropin and gonadotropin.

It localises to the secreted. Its function is as follows. Promotes spermatogenesis and ovulation by stimulating the testes and ovaries to synthesize steroids. The chain is Lutropin subunit beta (LHB) from Balaenoptera acutorostrata (Common minke whale).